The chain runs to 139 residues: Transcription antitermination protein NusB (139 aa).

The protein belongs to the NusB family.

Functionally, involved in transcription antitermination. Required for transcription of ribosomal RNA (rRNA) genes. Binds specifically to the boxA antiterminator sequence of the ribosomal RNA (rrn) operons. The protein is Transcription antitermination protein NusB of Rubrobacter xylanophilus (strain DSM 9941 / JCM 11954 / NBRC 16129 / PRD-1).